Consider the following 484-residue polypeptide: F-box/LRR-repeat protein At3g59210 (484 aa).

In terms of domain architecture, F-box spans 6-54 (KDIINCLPDNLLCQILSNLSTKEAALTSLLSKRWRYLFALVPNLDFDVL). 5 LRR repeats span residues 144 to 170 (KIGP…NLDS), 172 to 197 (VFEE…SLLN), 205 to 234 (SCSV…SFDT), 303 to 334 (TLYL…TIES), and 335 to 360 (HPEL…VFQG).

The protein is F-box/LRR-repeat protein At3g59210 of Arabidopsis thaliana (Mouse-ear cress).